A 228-amino-acid polypeptide reads, in one-letter code: Pyridoxamine 5'-phosphate oxidase (228 aa).

Position 20 to 23 (20 to 23 (QYDK)) interacts with pyridoxal 5'-phosphate. Lys29 is covalently cross-linked (Glycyl lysine isopeptide (Lys-Gly) (interchain with G-Cter in ubiquitin)). Residue 73–76 (RILL) coordinates FMN. Lys78 is a binding site for pyridoxal 5'-phosphate. FMN is bound by residues 88 to 89 (YS), 95 to 96 (RK), and Gln118. Positions 136, 140, and 144 each coordinate pyridoxal 5'-phosphate. FMN-binding positions include 153–154 (QS) and Trp199. 205–207 (RLH) contributes to the pyridoxal 5'-phosphate binding site. Residue Arg209 coordinates FMN.

The protein belongs to the pyridoxamine 5'-phosphate oxidase family. As to quaternary structure, homodimer. The cofactor is FMN.

It localises to the mitochondrion intermembrane space. The catalysed reaction is pyridoxamine 5'-phosphate + O2 + H2O = pyridoxal 5'-phosphate + H2O2 + NH4(+). It catalyses the reaction pyridoxine 5'-phosphate + O2 = pyridoxal 5'-phosphate + H2O2. Its pathway is cofactor metabolism; pyridoxal 5'-phosphate salvage; pyridoxal 5'-phosphate from pyridoxamine 5'-phosphate: step 1/1. The protein operates within cofactor metabolism; pyridoxal 5'-phosphate salvage; pyridoxal 5'-phosphate from pyridoxine 5'-phosphate: step 1/1. Functionally, catalyzes the oxidation of either pyridoxine 5'-phosphate (PNP) or pyridoxamine 5'-phosphate (PMP) into pyridoxal 5'-phosphate (PLP). The polypeptide is Pyridoxamine 5'-phosphate oxidase (PDX3) (Saccharomyces cerevisiae (strain ATCC 204508 / S288c) (Baker's yeast)).